The sequence spans 583 residues: Arginine--tRNA ligase (583 aa).

Residues 123–133 (PNIAKEMHVGH) carry the 'HIGH' region motif.

It belongs to the class-I aminoacyl-tRNA synthetase family. As to quaternary structure, monomer.

Its subcellular location is the cytoplasm. The enzyme catalyses tRNA(Arg) + L-arginine + ATP = L-arginyl-tRNA(Arg) + AMP + diphosphate. The chain is Arginine--tRNA ligase from Blochmanniella floridana.